The primary structure comprises 114 residues: NADH dehydrogenase [ubiquinone] 1 subunit C2, isoform 2 (114 aa).

The helical transmembrane segment at 56-75 (GLHRQLLYITAFFFAGYYLV) threads the bilayer.

The protein belongs to the complex I NDUFC2 subunit family. In terms of assembly, complex I is composed of 45 different subunits.

The protein resides in the mitochondrion inner membrane. Its function is as follows. Accessory subunit of the mitochondrial membrane respiratory chain NADH dehydrogenase (Complex I), that is believed not to be involved in catalysis. Complex I functions in the transfer of electrons from NADH to the respiratory chain. The immediate electron acceptor for the enzyme is believed to be ubiquinone. This Homo sapiens (Human) protein is NADH dehydrogenase [ubiquinone] 1 subunit C2, isoform 2 (NDUFC2-KCTD14).